We begin with the raw amino-acid sequence, 444 residues long: MTVDHAEQGLGVVSEAAAQVDGLGLALTDHPQIRGALVLSTCNRVCLIVETSPEAVAQGFDEAALRRCIADHGANVLAESAQLVCENDAVWRLFRVAAGMESMVFGEREVAGQMKRALSEARREQTVSYTIGHVVEEALKTSRHVATETALAAEGRTVVAVGLDLVAQRMDLDGARVLVMGTGSYAGASCAQLSSRGVAEIQVHSASGRAAGFARRHRVSEALDIDAALAQADLVVTCRGSGVPALSAEAARRAVDARRGRDLMVLDLAISGDVEEPVPAGVEVIDLETIRQAVPASAEAERAAAEHIIATGVRHFAVDLERRRMAPAVVALRDVISDLVTAELERLPEEGSVPVDEVAASLRRLAASMAHIPSARARMASEQGLGDRWLNSLSDVLGIDVDIAAPVIDMSSFANADCMTCPVTGLRVEDLATDAAPRGEERTS.

Residues 41–44 (TCNR), serine 102, 107–109 (ERE), and glutamine 113 contribute to the substrate site. Cysteine 42 (nucleophile) is an active-site residue. 181–186 (GTGSYA) provides a ligand contact to NADP(+).

It belongs to the glutamyl-tRNA reductase family. As to quaternary structure, homodimer.

The enzyme catalyses (S)-4-amino-5-oxopentanoate + tRNA(Glu) + NADP(+) = L-glutamyl-tRNA(Glu) + NADPH + H(+). Its pathway is porphyrin-containing compound metabolism; protoporphyrin-IX biosynthesis; 5-aminolevulinate from L-glutamyl-tRNA(Glu): step 1/2. Functionally, catalyzes the NADPH-dependent reduction of glutamyl-tRNA(Glu) to glutamate 1-semialdehyde (GSA). The protein is Glutamyl-tRNA reductase of Cutibacterium acnes (strain DSM 16379 / KPA171202) (Propionibacterium acnes).